Here is a 422-residue protein sequence, read N- to C-terminus: 5'-deoxyadenosine deaminase (422 aa).

The Zn(2+) site is built by H57 and H59. Residues E86 and H178 each contribute to the substrate site. Zn(2+) is bound at residue H205. The substrate site is built by E208 and D294. D294 serves as a coordination point for Zn(2+).

It belongs to the metallo-dependent hydrolases superfamily. MTA/SAH deaminase family. Homotetramer. Requires Zn(2+) as cofactor.

It catalyses the reaction 5'-deoxyadenosine + H2O + H(+) = 5'-deoxyinosine + NH4(+). The catalysed reaction is S-adenosyl-L-homocysteine + H2O + H(+) = S-inosyl-L-homocysteine + NH4(+). It carries out the reaction S-methyl-5'-thioadenosine + H2O + H(+) = S-methyl-5'-thioinosine + NH4(+). The enzyme catalyses adenosine + H2O + H(+) = inosine + NH4(+). It functions in the pathway amino-acid biosynthesis; S-adenosyl-L-methionine biosynthesis. Catalyzes the deamination of three SAM-derived enzymatic products, namely 5'-deoxyadenosine, S-adenosyl-L-homocysteine, and 5'-methylthioadenosine, to produce the inosine analogs. Can also deaminate adenosine. The preferred substrate for this enzyme is 5'-deoxyadenosine, but all these substrates are efficiently deaminated. Likely functions in a S-adenosyl-L-methionine (SAM) recycling pathway from S-adenosyl-L-homocysteine (SAH) produced from SAM-dependent methylation reactions. May also be involved in the recycling of 5'-deoxyadenosine, whereupon the 5'-deoxyribose moiety of 5'-deoxyinosine is further metabolized to deoxyhexoses used for the biosynthesis of aromatic amino acids in methanogens. In Methanococcus maripaludis (strain C6 / ATCC BAA-1332), this protein is 5'-deoxyadenosine deaminase.